The primary structure comprises 167 residues: MSPQTHTLSVLVEAKPGVLARVAALFSRRGFNIESLAVGATEQKDMSRMTIVVSAEETPLEQITKQLNKLINVIKIVELEDGNSVSRELALIKVRADAGTRSQVIEAVNLFRAKVIDVSPEALTIEATGDRGKIEALLRVLEPSVSVRSSNREWCRCPGPRGIGTAK.

The ACT domain maps to 7-81 (TLSVLVEAKP…NVIKIVELED (75 aa)).

Belongs to the acetolactate synthase small subunit family. As to quaternary structure, dimer of large and small chains.

The enzyme catalyses 2 pyruvate + H(+) = (2S)-2-acetolactate + CO2. Its pathway is amino-acid biosynthesis; L-isoleucine biosynthesis; L-isoleucine from 2-oxobutanoate: step 1/4. It functions in the pathway amino-acid biosynthesis; L-valine biosynthesis; L-valine from pyruvate: step 1/4. In Mycobacterium avium, this protein is Acetolactate synthase small subunit (ilvH).